Consider the following 188-residue polypeptide: Putative ankyrin repeat protein FPV230 (188 aa).

ANK repeat units lie at residues 2–31 (ENEL…NPNA), 36–65 (KYMI…DANV), 135–164 (LGST…DINI), and 168–187 (NNNT…YLKC).

This Vertebrata (FPV) protein is Putative ankyrin repeat protein FPV230.